The chain runs to 545 residues: Probable intron-encoded endonuclease 4 (545 aa).

Transmembrane regions (helical) follow at residues 1 to 21, 30 to 50, 81 to 101, 119 to 139, 140 to 160, 177 to 197, and 200 to 220; these read MYLSIIILPLLGSIVAGFFGR, LITCLSVIITTGLAILAFFEV, LTVAMLIPVLIISSLVHIYSI, LFTFMMIILVTANNYLLMFVG, WEGVGVCSYLLVSFWFTRIAA, FLTIGMFVVLWTLGNLDYATV, and LAPYINSDIATIIGICLLIGA. The ndh-5 exons 1 and 2 encoded stretch occupies residues 1-239; it reads MYLSIIILPL…HVWLPMAMEG (239 aa). The interval 240–545 is ndh-5 intron 2 encoded; the sequence is FFSRAFLKLH…NNINKSDYNK (306 aa).

The protein in the N-terminal section; belongs to the complex I subunit 5 family. In the C-terminal section; belongs to the LAGLIDADG endonuclease family.

It is found in the mitochondrion membrane. In terms of biological role, mitochondrial DNA endonuclease involved in intron homing. This is Probable intron-encoded endonuclease 4 from Neurospora crassa (strain ATCC 24698 / 74-OR23-1A / CBS 708.71 / DSM 1257 / FGSC 987).